The chain runs to 366 residues: Histidinol-phosphate aminotransferase (366 aa).

N6-(pyridoxal phosphate)lysine is present on Lys228.

Belongs to the class-II pyridoxal-phosphate-dependent aminotransferase family. Histidinol-phosphate aminotransferase subfamily. Homodimer. Pyridoxal 5'-phosphate serves as cofactor.

The catalysed reaction is L-histidinol phosphate + 2-oxoglutarate = 3-(imidazol-4-yl)-2-oxopropyl phosphate + L-glutamate. It participates in amino-acid biosynthesis; L-histidine biosynthesis; L-histidine from 5-phospho-alpha-D-ribose 1-diphosphate: step 7/9. This chain is Histidinol-phosphate aminotransferase, found in Corynebacterium glutamicum (strain ATCC 13032 / DSM 20300 / JCM 1318 / BCRC 11384 / CCUG 27702 / LMG 3730 / NBRC 12168 / NCIMB 10025 / NRRL B-2784 / 534).